The sequence spans 318 residues: Aspartate carbamoyltransferase catalytic subunit (318 aa).

Positions 59 and 60 each coordinate carbamoyl phosphate. Lys-87 contacts L-aspartate. The carbamoyl phosphate site is built by Arg-109, His-137, and Gln-140. L-aspartate is bound by residues Arg-170 and Arg-224. Positions 265 and 266 each coordinate carbamoyl phosphate.

Belongs to the aspartate/ornithine carbamoyltransferase superfamily. ATCase family. Heterododecamer (2C3:3R2) of six catalytic PyrB chains organized as two trimers (C3), and six regulatory PyrI chains organized as three dimers (R2).

It catalyses the reaction carbamoyl phosphate + L-aspartate = N-carbamoyl-L-aspartate + phosphate + H(+). It functions in the pathway pyrimidine metabolism; UMP biosynthesis via de novo pathway; (S)-dihydroorotate from bicarbonate: step 2/3. Functionally, catalyzes the condensation of carbamoyl phosphate and aspartate to form carbamoyl aspartate and inorganic phosphate, the committed step in the de novo pyrimidine nucleotide biosynthesis pathway. This chain is Aspartate carbamoyltransferase catalytic subunit, found in Allorhizobium ampelinum (strain ATCC BAA-846 / DSM 112012 / S4) (Agrobacterium vitis (strain S4)).